The following is a 528-amino-acid chain: Linear element-associated protein hop1 (528 aa).

The 202-residue stretch at 11–212 (TKSDFTLKNL…RGEFKDIVSF (202 aa)) folds into the HORMA domain. A PHD-type zinc finger spans residues 334-385 (LLNCECGDSTEDSEMFQCERCDGWVHCACYGFESDSDPRQPNQLLCYTCLLV). Zn(2+)-binding residues include Cys337, Cys339, Cys351, Cys354, His359, Cys362, Cys379, and Cys382. The disordered stretch occupies residues 507–528 (RPKKVSKTSNTKETDTMKPLRI). Residues 516–528 (NTKETDTMKPLRI) are compositionally biased toward basic and acidic residues.

In terms of assembly, interacts (via N-terminus) with rec10; the interaction is direct. Interacts (via C-terminus) with rec15 (via C-terminus); the interaction is direct.

It is found in the nucleus. Its subcellular location is the chromosome. Facilitates initiation of meiotic recombination and DNA double-strand break (DSB) formation at DSB hotspot sites by enhancing the interaction between rec10 and rec15. The protein is Linear element-associated protein hop1 of Schizosaccharomyces pombe (strain 972 / ATCC 24843) (Fission yeast).